Reading from the N-terminus, the 962-residue chain is Protease 3 (962 aa).

The signal sequence occupies residues 1–23; the sequence is MPRSTWFKALLLLVALWGPAVQA. Zn(2+) is bound at residue histidine 88. Glutamate 91 (proton acceptor) is an active-site residue. The Zn(2+) site is built by histidine 92 and glutamate 169.

Belongs to the peptidase M16 family. Monomer. The cofactor is Zn(2+).

Its subcellular location is the periplasm. It catalyses the reaction Preferential cleavage of 16-Tyr-|-Leu-17 and 25-Phe-|-Tyr-26 bonds of oxidized insulin B chain. Also acts on other substrates of Mw less than 7 kDa such as insulin and glucagon.. Its function is as follows. Endopeptidase that degrades small peptides of less than 7 kDa, such as glucagon and insulin. In Salmonella typhimurium (strain LT2 / SGSC1412 / ATCC 700720), this protein is Protease 3 (ptrA).